We begin with the raw amino-acid sequence, 298 residues long: ATP phosphoribosyltransferase (298 aa).

This sequence belongs to the ATP phosphoribosyltransferase family. Long subfamily. It depends on Mg(2+) as a cofactor.

Its subcellular location is the cytoplasm. It carries out the reaction 1-(5-phospho-beta-D-ribosyl)-ATP + diphosphate = 5-phospho-alpha-D-ribose 1-diphosphate + ATP. It participates in amino-acid biosynthesis; L-histidine biosynthesis; L-histidine from 5-phospho-alpha-D-ribose 1-diphosphate: step 1/9. Its activity is regulated as follows. Feedback inhibited by histidine. Catalyzes the condensation of ATP and 5-phosphoribose 1-diphosphate to form N'-(5'-phosphoribosyl)-ATP (PR-ATP). Has a crucial role in the pathway because the rate of histidine biosynthesis seems to be controlled primarily by regulation of HisG enzymatic activity. The polypeptide is ATP phosphoribosyltransferase (Tolumonas auensis (strain DSM 9187 / NBRC 110442 / TA 4)).